The following is a 156-amino-acid chain: Ribosomal RNA large subunit methyltransferase H (156 aa).

Residues leucine 73, glycine 104, and 123 to 128 each bind S-adenosyl-L-methionine; that span reads IGPLTL.

The protein belongs to the RNA methyltransferase RlmH family. As to quaternary structure, homodimer.

Its subcellular location is the cytoplasm. It carries out the reaction pseudouridine(1915) in 23S rRNA + S-adenosyl-L-methionine = N(3)-methylpseudouridine(1915) in 23S rRNA + S-adenosyl-L-homocysteine + H(+). In terms of biological role, specifically methylates the pseudouridine at position 1915 (m3Psi1915) in 23S rRNA. The polypeptide is Ribosomal RNA large subunit methyltransferase H (Xanthomonas euvesicatoria pv. vesicatoria (strain 85-10) (Xanthomonas campestris pv. vesicatoria)).